Consider the following 245-residue polypeptide: 1-(5-phosphoribosyl)-5-[(5-phosphoribosylamino)methylideneamino] imidazole-4-carboxamide isomerase (245 aa).

The Proton acceptor role is filled by Asp7. Asp129 serves as the catalytic Proton donor.

This sequence belongs to the HisA/HisF family.

The protein localises to the cytoplasm. The enzyme catalyses 1-(5-phospho-beta-D-ribosyl)-5-[(5-phospho-beta-D-ribosylamino)methylideneamino]imidazole-4-carboxamide = 5-[(5-phospho-1-deoxy-D-ribulos-1-ylimino)methylamino]-1-(5-phospho-beta-D-ribosyl)imidazole-4-carboxamide. It functions in the pathway amino-acid biosynthesis; L-histidine biosynthesis; L-histidine from 5-phospho-alpha-D-ribose 1-diphosphate: step 4/9. The protein is 1-(5-phosphoribosyl)-5-[(5-phosphoribosylamino)methylideneamino] imidazole-4-carboxamide isomerase of Shewanella baltica (strain OS195).